Consider the following 178-residue polypeptide: ATP synthase subunit delta (178 aa).

It belongs to the ATPase delta chain family. As to quaternary structure, F-type ATPases have 2 components, F(1) - the catalytic core - and F(0) - the membrane proton channel. F(1) has five subunits: alpha(3), beta(3), gamma(1), delta(1), epsilon(1). F(0) has three main subunits: a(1), b(2) and c(10-14). The alpha and beta chains form an alternating ring which encloses part of the gamma chain. F(1) is attached to F(0) by a central stalk formed by the gamma and epsilon chains, while a peripheral stalk is formed by the delta and b chains.

It is found in the cell membrane. In terms of biological role, f(1)F(0) ATP synthase produces ATP from ADP in the presence of a proton or sodium gradient. F-type ATPases consist of two structural domains, F(1) containing the extramembraneous catalytic core and F(0) containing the membrane proton channel, linked together by a central stalk and a peripheral stalk. During catalysis, ATP synthesis in the catalytic domain of F(1) is coupled via a rotary mechanism of the central stalk subunits to proton translocation. Its function is as follows. This protein is part of the stalk that links CF(0) to CF(1). It either transmits conformational changes from CF(0) to CF(1) or is implicated in proton conduction. The polypeptide is ATP synthase subunit delta (Streptococcus pyogenes serotype M2 (strain MGAS10270)).